Consider the following 486-residue polypeptide: Glycogen synthase 2 (486 aa).

K15 lines the ADP-alpha-D-glucose pocket.

The protein belongs to the glycosyltransferase 1 family. Bacterial/plant glycogen synthase subfamily.

The catalysed reaction is [(1-&gt;4)-alpha-D-glucosyl](n) + ADP-alpha-D-glucose = [(1-&gt;4)-alpha-D-glucosyl](n+1) + ADP + H(+). The protein operates within glycan biosynthesis; glycogen biosynthesis. Functionally, synthesizes alpha-1,4-glucan chains using ADP-glucose. The polypeptide is Glycogen synthase 2 (glgA2) (Rhizobium meliloti (strain 1021) (Ensifer meliloti)).